Here is a 615-residue protein sequence, read N- to C-terminus: (+)-alpha-pinene synthase TPS2, chloroplastic (615 aa).

Residues 1-55 (MHCMAVRHFAPSSSLSIFSSTNINNHFFGREIFTPKTSNITTKKSRSRPNCNPIQ) constitute a chloroplast transit peptide. (2E)-geranyl diphosphate-binding residues include Arg-330, Asp-367, Asp-371, Arg-509, and Asp-512. Residues Asp-367 and Asp-371 each contribute to the Mg(2+) site. Positions 367 to 371 (DDIYD) match the DDXXD motif motif. Mg(2+)-binding residues include Asp-512, Thr-516, and Glu-520.

This sequence belongs to the terpene synthase family. Tpsb subfamily. Mg(2+) is required as a cofactor. It depends on Mn(2+) as a cofactor. K(+) serves as cofactor. Trichome.

The protein localises to the plastid. It is found in the chloroplast. It carries out the reaction (2E)-geranyl diphosphate = (1R,5R)-alpha-pinene + diphosphate. It catalyses the reaction (2E)-geranyl diphosphate = (1R,5R)-beta-pinene + diphosphate. The enzyme catalyses (2E)-geranyl diphosphate = (4S)-limonene + diphosphate. The catalysed reaction is (2E)-geranyl diphosphate = beta-myrcene + diphosphate. It participates in secondary metabolite biosynthesis; terpenoid biosynthesis. The protein operates within terpene metabolism; (-)-alpha-pinene biosynthesis; (-)-alpha-pinene from geranyl diphosphate: step 1/1. Its function is as follows. Involved in monoterpene (C10) olefins biosynthesis, constituants of cannabinoids and terpenoids-rich resins. Catalyzes mainly the conversion of (2E)-geranyl diphosphate to (+)-alpha-pinene, and also produces minor products such as (-)-limonene, (+)-beta-pinene and beta-myrcene. In Cannabis sativa (Hemp), this protein is (+)-alpha-pinene synthase TPS2, chloroplastic.